A 419-amino-acid polypeptide reads, in one-letter code: S-adenosylmethionine synthase (419 aa).

An ATP-binding site is contributed by histidine 15. Residue aspartate 17 participates in Mg(2+) binding. Glutamate 43 contributes to the K(+) binding site. 2 residues coordinate L-methionine: glutamate 56 and glutamine 100. The segment at 100–110 is flexible loop; the sequence is QSPDIAQGVDE. ATP contacts are provided by residues 171 to 173, 248 to 249, aspartate 257, 263 to 264, alanine 280, and lysine 284; these read DGK, KF, and RK. Residue aspartate 257 coordinates L-methionine. Residue lysine 288 coordinates L-methionine.

Belongs to the AdoMet synthase family. As to quaternary structure, homotetramer; dimer of dimers. It depends on Mg(2+) as a cofactor. K(+) is required as a cofactor.

The protein resides in the cytoplasm. The catalysed reaction is L-methionine + ATP + H2O = S-adenosyl-L-methionine + phosphate + diphosphate. It functions in the pathway amino-acid biosynthesis; S-adenosyl-L-methionine biosynthesis; S-adenosyl-L-methionine from L-methionine: step 1/1. Its function is as follows. Catalyzes the formation of S-adenosylmethionine (AdoMet) from methionine and ATP. The overall synthetic reaction is composed of two sequential steps, AdoMet formation and the subsequent tripolyphosphate hydrolysis which occurs prior to release of AdoMet from the enzyme. The sequence is that of S-adenosylmethionine synthase from Synechococcus sp. (strain CC9311).